Here is a 236-residue protein sequence, read N- to C-terminus: F-box and leucine-rich protein 22 (236 aa).

In terms of domain architecture, F-box spans 1 to 46 (MHITQLNRECLLCLFSFLDKDSRRSLSRTCSQLRDVFEDPTLWPLL). 6 LRR repeats span residues 15–40 (FSFL…FEDP), 43–72 (WPLL…SICW), 98–123 (HESL…TLSG), 124–149 (CGHV…RLEN), 150–175 (CARV…HVDF), and 176–201 (CRNV…AERS).

Directly interacts with SKP1 and CUL1. As to expression, enriched in cardiac muscle (at protein level).

It localises to the cytoplasm. It is found in the myofibril. The protein resides in the sarcomere. Its subcellular location is the z line. The protein operates within protein modification; protein ubiquitination. Functionally, substrate-recognition component of the SCF (SKP1-CUL1-F-box protein)-type E3 ubiquitin ligase complex. Promotes ubiquitination of sarcomeric proteins alpha-actinin-2 (ACTN2) and filamin-C (FLNC). In Mus musculus (Mouse), this protein is F-box and leucine-rich protein 22 (Fbxl22).